The primary structure comprises 367 residues: 3-dehydroquinate synthase (367 aa).

NAD(+)-binding positions include 69-74 (DGEAFK), 103-107 (GVIGD), 127-128 (TT), lysine 140, and lysine 149. Positions 182, 245, and 262 each coordinate Zn(2+).

The protein belongs to the sugar phosphate cyclases superfamily. Dehydroquinate synthase family. Co(2+) is required as a cofactor. Requires Zn(2+) as cofactor. It depends on NAD(+) as a cofactor.

Its subcellular location is the cytoplasm. It carries out the reaction 7-phospho-2-dehydro-3-deoxy-D-arabino-heptonate = 3-dehydroquinate + phosphate. It participates in metabolic intermediate biosynthesis; chorismate biosynthesis; chorismate from D-erythrose 4-phosphate and phosphoenolpyruvate: step 2/7. Functionally, catalyzes the conversion of 3-deoxy-D-arabino-heptulosonate 7-phosphate (DAHP) to dehydroquinate (DHQ). This is 3-dehydroquinate synthase from Pseudomonas savastanoi pv. phaseolicola (strain 1448A / Race 6) (Pseudomonas syringae pv. phaseolicola (strain 1448A / Race 6)).